Consider the following 432-residue polypeptide: Proline--tRNA ligase (432 aa).

It belongs to the class-II aminoacyl-tRNA synthetase family. ProS type 2 subfamily. In terms of assembly, homodimer.

The protein localises to the cytoplasm. It carries out the reaction tRNA(Pro) + L-proline + ATP = L-prolyl-tRNA(Pro) + AMP + diphosphate. Catalyzes the attachment of proline to tRNA(Pro) in a two-step reaction: proline is first activated by ATP to form Pro-AMP and then transferred to the acceptor end of tRNA(Pro). The chain is Proline--tRNA ligase from Rickettsia prowazekii (strain Madrid E).